Consider the following 138-residue polypeptide: Putative pre-16S rRNA nuclease (138 aa).

Belongs to the YqgF nuclease family.

It localises to the cytoplasm. Its function is as follows. Could be a nuclease involved in processing of the 5'-end of pre-16S rRNA. In Clostridium tetani (strain Massachusetts / E88), this protein is Putative pre-16S rRNA nuclease.